The following is a 151-amino-acid chain: Large ribosomal subunit protein uL15 (151 aa).

Residues 1-57 form a disordered region; that stretch reads MTLRLDSLKSNKGARRRKLRKGRGIAAGQGASCGFGMRGQKSRSGRPTRPGFEGGQM. Basic residues predominate over residues 12–23; the sequence is KGARRRKLRKGR. Positions 25-37 are enriched in gly residues; it reads IAAGQGASCGFGM.

The protein belongs to the universal ribosomal protein uL15 family. Part of the 50S ribosomal subunit.

Binds to the 23S rRNA. This is Large ribosomal subunit protein uL15 from Synechococcus sp. (strain CC9605).